The primary structure comprises 718 residues: Threonine--tRNA ligase, mitochondrial (718 aa).

Position 52 is a phosphoserine (Ser-52). A TGS domain is found at 55-121 (QKEPRTIKIS…ETDSDLRFLT (67 aa)).

This sequence belongs to the class-II aminoacyl-tRNA synthetase family. Homodimer.

The protein localises to the mitochondrion matrix. It carries out the reaction tRNA(Thr) + L-threonine + ATP = L-threonyl-tRNA(Thr) + AMP + diphosphate + H(+). Functionally, catalyzes the attachment of threonine to tRNA(Thr) in a two-step reaction: threonine is first activated by ATP to form Thr-AMP and then transferred to the acceptor end of tRNA(Thr). Also edits incorrectly charged tRNA(Thr) via its editing domain. The protein is Threonine--tRNA ligase, mitochondrial (TARS2) of Homo sapiens (Human).